A 366-amino-acid chain; its full sequence is Histidinol-phosphate aminotransferase 2 (366 aa).

Lys-226 bears the N6-(pyridoxal phosphate)lysine mark.

Belongs to the class-II pyridoxal-phosphate-dependent aminotransferase family. Histidinol-phosphate aminotransferase subfamily. In terms of assembly, homodimer. Requires pyridoxal 5'-phosphate as cofactor.

The enzyme catalyses L-histidinol phosphate + 2-oxoglutarate = 3-(imidazol-4-yl)-2-oxopropyl phosphate + L-glutamate. It functions in the pathway amino-acid biosynthesis; L-histidine biosynthesis; L-histidine from 5-phospho-alpha-D-ribose 1-diphosphate: step 7/9. The sequence is that of Histidinol-phosphate aminotransferase 2 from Haemophilus influenzae (strain 86-028NP).